The primary structure comprises 56 residues: Protein YqiD (56 aa).

A helical transmembrane segment spans residues 2-22 (FIAWYWIVLIALVVVGYFLHL).

The protein resides in the cell inner membrane. This is Protein YqiD from Escherichia coli (strain K12).